Reading from the N-terminus, the 509-residue chain is MANFTFGDLALDVARMGGLASTPSGLRSTGLTTPGLSPTGLVTSDFNDSYGLTGQFINGSHSSRSRDNASANDTSATNMTDDRYWSLTVYSHEHLVLTSVILGLFVLCCIIGNCFVIAAVMLERSLHNVANYLILSLAVADLMVAVLVMPLSVVSEISKVWFLHSEVCDMWISVDVLCCTASILHLVAIAMDRYWAVTSIDYIRRRSARRILLMIMVVWIVALFISIPPLFGWRDPNNDPDKTGTCIISQDKGYTIFSTVGAFYLPMLVMMIIYIRIWLVARSRIRKDKFQMTKARLKTEETTLVASPKTEYSVVSDCNGCNSPDSTTEKKKRRAPFKSYGCSPRPERKKNRAKKLPENANGVNSNSSSSERLKQIQIETAEAFANGCAEEASIAMLERQCNNGKKISSNDTPYSRTREKLELKRERKAARTLAIITGAFLICWLPFFIIALIGPFVDPEGIPPFARSFVLWLGYFNSLLNPIIYTIFSPEFRSAFQKILFGKYRRGHR.

At 1-99 (MANFTFGDLA…YSHEHLVLTS (99 aa)) the chain is on the extracellular side. N-linked (GlcNAc...) asparagine glycosylation is found at N3, N47, N58, N68, N72, and N78. The chain crosses the membrane as a helical span at residues 100–122 (VILGLFVLCCIIGNCFVIAAVML). At 123–132 (ERSLHNVANY) the chain is on the cytoplasmic side. A helical transmembrane segment spans residues 133-154 (LILSLAVADLMVAVLVMPLSVV). At 155 to 169 (SEISKVWFLHSEVCD) the chain is on the extracellular side. The cysteines at positions 168 and 246 are disulfide-linked. The helical transmembrane segment at 170-191 (MWISVDVLCCTASILHLVAIAM) threads the bilayer. Topologically, residues 192–210 (DRYWAVTSIDYIRRRSARR) are cytoplasmic. The chain crosses the membrane as a helical span at residues 211–233 (ILLMIMVVWIVALFISIPPLFGW). The Extracellular segment spans residues 234–259 (RDPNNDPDKTGTCIISQDKGYTIFST). Residues 260-281 (VGAFYLPMLVMMIIYIRIWLVA) form a helical membrane-spanning segment. The Cytoplasmic portion of the chain corresponds to 282–432 (RSRIRKDKFQ…LKRERKAART (151 aa)). A disordered region spans residues 323–372 (SPDSTTEKKKRRAPFKSYGCSPRPERKKNRAKKLPENANGVNSNSSSSER). A helical transmembrane segment spans residues 433–456 (LAIITGAFLICWLPFFIIALIGPF). Residues 457 to 465 (VDPEGIPPF) lie on the Extracellular side of the membrane. The helical transmembrane segment at 466–488 (ARSFVLWLGYFNSLLNPIIYTIF) threads the bilayer. Over 489 to 509 (SPEFRSAFQKILFGKYRRGHR) the chain is Cytoplasmic.

Belongs to the G-protein coupled receptor 1 family.

It localises to the cell membrane. In terms of biological role, this is a receptor for 5-hydroxytryptamine (serotonin), a biogenic hormone that function as a neurotransmitter, a hormone, and a mitogen. This Lymnaea stagnalis (Great pond snail) protein is 5-hydroxytryptamine receptor.